Here is a 62-residue protein sequence, read N- to C-terminus: Potassium channel toxin kappa-KTx 1.4 (62 aa).

The signal sequence occupies residues 1 to 26; that stretch reads MKSCLINVSLLILLLLPILGYASVNA. Residues 27-38 constitute a propeptide that is removed on maturation; that stretch reads ESIDGENDFEEE. 2 disulfides stabilise this stretch: C43–C61 and C47–C57.

Belongs to the short scorpion toxin superfamily. Potassium channel inhibitor kappa-KTx family. Kappa-KTx 1 subfamily. Expressed by the venom gland.

It localises to the secreted. In terms of biological role, shows structural homology with WaTx suggesting that it acts as a cell-penetrating peptide (CPP) with defensive purpose that induces pain by specifically activating mammalian sensory neuron TRPA1 channels. Has no effect on the voltage-gated potassium channels tested. The chain is Potassium channel toxin kappa-KTx 1.4 from Heterometrus petersii (Asian forest scorpion).